A 609-amino-acid polypeptide reads, in one-letter code: ATP-dependent lipid A-core flippase (609 aa).

A run of 6 helical transmembrane segments spans residues 47–67 (LLAA…IYLI), 88–108 (ILML…VGSF), 167–187 (AIIT…VMFV), 190–210 (WQLS…ISII), 279–299 (VIQI…AIFG), and 305–325 (GSSW…AAIL). One can recognise an ABC transmembrane type-1 domain in the interval 47–340 (LLAAIGSIFF…LTKVNVVIQK (294 aa)). The region spanning 372–606 (VTIKDLSFAF…GGLYTRLYQS (235 aa)) is the ABC transporter domain. 404–411 (GKSGSGKT) provides a ligand contact to ATP.

Belongs to the ABC transporter superfamily. Lipid exporter (TC 3.A.1.106) family. As to quaternary structure, homodimer.

The protein localises to the cell inner membrane. The enzyme catalyses ATP + H2O + lipid A-core oligosaccharideSide 1 = ADP + phosphate + lipid A-core oligosaccharideSide 2.. In terms of biological role, involved in lipopolysaccharide (LPS) biosynthesis. Translocates lipid A-core from the inner to the outer leaflet of the inner membrane. Transmembrane domains (TMD) form a pore in the inner membrane and the ATP-binding domain (NBD) is responsible for energy generation. This is ATP-dependent lipid A-core flippase from Francisella tularensis subsp. tularensis (strain FSC 198).